A 542-amino-acid polypeptide reads, in one-letter code: CTP synthase (542 aa).

An amidoligase domain region spans residues 1-265; the sequence is MARYVFITGG…DSEVLAAFGI (265 aa). A CTP-binding site is contributed by S13. UTP is bound at residue S13. ATP is bound by residues 14-19 and D71; that span reads SLGKGI. Mg(2+) contacts are provided by D71 and E139. CTP is bound by residues 146–148, 186–191, and K222; these read DIE and KTKPTQ. UTP contacts are provided by residues 186-191 and K222; that span reads KTKPTQ. Residues 291-541 form the Glutamine amidotransferase type-1 domain; that stretch reads TIAIVGKYTG…VEAAVEQSRL (251 aa). G353 serves as a coordination point for L-glutamine. C380 acts as the Nucleophile; for glutamine hydrolysis in catalysis. Residues 381–384, E404, and R469 contribute to the L-glutamine site; that span reads FGMQ. Residues H514 and E516 contribute to the active site.

This sequence belongs to the CTP synthase family. Homotetramer.

The enzyme catalyses UTP + L-glutamine + ATP + H2O = CTP + L-glutamate + ADP + phosphate + 2 H(+). It carries out the reaction L-glutamine + H2O = L-glutamate + NH4(+). The catalysed reaction is UTP + NH4(+) + ATP = CTP + ADP + phosphate + 2 H(+). Its pathway is pyrimidine metabolism; CTP biosynthesis via de novo pathway; CTP from UDP: step 2/2. Its activity is regulated as follows. Allosterically activated by GTP, when glutamine is the substrate; GTP has no effect on the reaction when ammonia is the substrate. The allosteric effector GTP functions by stabilizing the protein conformation that binds the tetrahedral intermediate(s) formed during glutamine hydrolysis. Inhibited by the product CTP, via allosteric rather than competitive inhibition. Its function is as follows. Catalyzes the ATP-dependent amination of UTP to CTP with either L-glutamine or ammonia as the source of nitrogen. Regulates intracellular CTP levels through interactions with the four ribonucleotide triphosphates. This Agrobacterium fabrum (strain C58 / ATCC 33970) (Agrobacterium tumefaciens (strain C58)) protein is CTP synthase.